Consider the following 699-residue polypeptide: Sarcoplasmic reticulum histidine-rich calcium-binding protein (699 aa).

The N-terminal stretch at 1-28 (MGHHRPWLHASVLWAGVASLLLPPAMTQ) is a signal peptide. Positions 50-95 (SEEASAELRHHLHSPRDHPDENKDVSTENGHHFWSHPDREKEDEDV) are disordered. Over residues 55-89 (AELRHHLHSPRDHPDENKDVSTENGHHFWSHPDRE) the composition is skewed to basic and acidic residues. Position 76 is a phosphothreonine; by FAM20C (threonine 76). 10 consecutive repeat copies span residues 106 to 121 (HRSQDHKVGDEGVSGE), 134 to 154 (HRGHGSEDTEDSAEHRHHLPS), 155 to 177 (HRSHSHQDEDEDEVVSSEHHHHI), 180 to 213 (HGHRGHDGEDDEGEEEEEEEEEEEEASTEYGHQA), 214 to 237 (HRHRGHGSEEDEDVSDGHHHHGPS), 238 to 270 (HRHQGHEEDDDDDDDDDDDDDDDDVSIEYRHQA), 271 to 294 (HRHQGHGIEEDEDVSDGHHHRDPS), 295 to 318 (HRHRSHEEDDNDDDDVSTEYGHQA), 319 to 342 (HRHQDHRKEEVEAVSGEHHHHVPD), and 343 to 365 (HRHQGHRDEEEDEDVSTERWHQG). Residues 106–342 (HRSQDHKVGD…SGEHHHHVPD (237 aa)) form a 6 X approximate tandem repeats region. The segment at 106–365 (HRSQDHKVGD…DVSTERWHQG (260 aa)) is 4 X tandem repeats, acidic. Phosphoserine; by FAM20C occurs at positions 119 and 145. Residues 127–617 (HGGQARGHRG…EDTGPQDAQE (491 aa)) are disordered. Basic residues-rich tracts occupy residues 148–158 (HRHHLPSHRSH) and 173–183 (HHHHILRHGHR). The segment covering 187–206 (GEDDEGEEEEEEEEEEEEAS) has biased composition (acidic residues). Positions 231–241 (HHHHGPSHRHQ) are enriched in basic residues. A compositionally biased stretch (acidic residues) spans 244-263 (EEDDDDDDDDDDDDDDDDVS). Positions 288 to 298 (HHHRDPSHRHR) are enriched in basic residues. The segment covering 302-311 (EDDNDDDDVS) has biased composition (acidic residues). Positions 324–335 (HRKEEVEAVSGE) are enriched in basic and acidic residues. Serine 333 bears the Phosphoserine mark. Residues 336–347 (HHHHVPDHRHQG) show a composition bias toward basic residues. Residues serine 358 and serine 431 each carry the phosphoserine; by FAM20C modification. 2 stretches are compositionally biased toward basic and acidic residues: residues 444–463 (SHQDEETGHGQRGSIKEMSH) and 470–481 (VVKDRSHLRKDD). Phosphoserine; by FAM20C is present on serine 494. Residues 504 to 515 (QGEKGTHHGSRD) show a composition bias toward basic and acidic residues. Composition is skewed to acidic residues over residues 532–551 (QEEEEEEDKEEEEEEEDEER) and 567–581 (SEEEEEEEEGLEEDE). Serine 567 carries the post-translational modification Phosphoserine; by FAM20C. Residues 627–673 (CGYCSFCNRCTECESCHCDEENMGEHCDQCQHCQFCYLCPLVCETVC) are metal-binding.

Belongs to the HRC family.

The protein resides in the sarcoplasmic reticulum lumen. In terms of biological role, may play a role in the regulation of calcium sequestration or release in the SR of skeletal and cardiac muscle. In Homo sapiens (Human), this protein is Sarcoplasmic reticulum histidine-rich calcium-binding protein (HRC).